A 272-amino-acid chain; its full sequence is Hemin import ATP-binding protein HmuV (272 aa).

The ABC transporter domain maps to L2–R255. G34–S41 is a binding site for ATP.

It belongs to the ABC transporter superfamily. Heme (hemin) importer (TC 3.A.1.14.5) family. As to quaternary structure, the complex is composed of two ATP-binding proteins (HmuV), two transmembrane proteins (HmuU) and a solute-binding protein (HmuT).

Its subcellular location is the cell inner membrane. Part of the ABC transporter complex HmuTUV involved in hemin import. Responsible for energy coupling to the transport system. The polypeptide is Hemin import ATP-binding protein HmuV (Burkholderia mallei (strain ATCC 23344)).